The sequence spans 398 residues: MNYNKKSIEYIDVKGKKVLVRCDFNVPLNEGKITDENRLVGALPTIKYLMEKGAKIILCSHMGKPKGEPKKELSLLPVAKRLSEMLNKEVIFADDDNVVGENAKKAVEDMKDGDVVLLQNTRYRKEETKNEEVFSKELASLADVFVNDAFGTAHRAHCSTVGVTNYLKEAACGYLIQKELKFLGNAVEKPERPFVAILGGAKVSDKINVINNLLDKVDTLIIGGGMGYTFLKAQGYTIGNSLVEEDKVEYSKEMIDKAKEKGVNLLLPIDNVVADKFDKDASPVVTEDQNIGEGYMGLDIGPKTAKIYSDAIKSAKTVVWNGPMGVFEFKSFANGTIEVAKAMADSDAVTIIGGGDSAAAVNILGFGDKMTHISTGGGASLEFLEGKELPGIAALNDK.

Substrate is bound by residues 23–25 (DFN), Arg38, 61–64 (HMGK), Arg122, and Arg155. ATP contacts are provided by residues Lys206, Gly297, Glu328, and 354–357 (GGDS).

Belongs to the phosphoglycerate kinase family. As to quaternary structure, monomer.

Its subcellular location is the cytoplasm. It catalyses the reaction (2R)-3-phosphoglycerate + ATP = (2R)-3-phospho-glyceroyl phosphate + ADP. It functions in the pathway carbohydrate degradation; glycolysis; pyruvate from D-glyceraldehyde 3-phosphate: step 2/5. This Clostridium botulinum (strain Kyoto / Type A2) protein is Phosphoglycerate kinase.